The chain runs to 340 residues: Glycerol-3-phosphate dehydrogenase [NAD(P)+] (340 aa).

Positions 13, 14, and 108 each coordinate NADPH. 3 residues coordinate sn-glycerol 3-phosphate: lysine 108, glycine 137, and threonine 139. Alanine 141 lines the NADPH pocket. 5 residues coordinate sn-glycerol 3-phosphate: lysine 193, aspartate 246, serine 256, arginine 257, and asparagine 258. Residue lysine 193 is the Proton acceptor of the active site. NADPH is bound at residue arginine 257. NADPH-binding residues include isoleucine 281 and glutamate 283.

Belongs to the NAD-dependent glycerol-3-phosphate dehydrogenase family.

It is found in the cytoplasm. It carries out the reaction sn-glycerol 3-phosphate + NAD(+) = dihydroxyacetone phosphate + NADH + H(+). The enzyme catalyses sn-glycerol 3-phosphate + NADP(+) = dihydroxyacetone phosphate + NADPH + H(+). It participates in membrane lipid metabolism; glycerophospholipid metabolism. Catalyzes the reduction of the glycolytic intermediate dihydroxyacetone phosphate (DHAP) to sn-glycerol 3-phosphate (G3P), the key precursor for phospholipid synthesis. This chain is Glycerol-3-phosphate dehydrogenase [NAD(P)+], found in Bartonella quintana (strain Toulouse) (Rochalimaea quintana).